Reading from the N-terminus, the 130-residue chain is Protein AUXIN-REGULATED GENE INVOLVED IN ORGAN SIZE (130 aa).

Residues 65 to 116 (FSLESLFLLVGLTASLLILPLVLPPLPPPPFMLLLVPIGIMVLLVVLAFMPS) form an organ Size Related (OSR) domain region. 2 helical membrane passes run 70 to 90 (LFLL…LPPL) and 94 to 114 (PFML…LAFM).

This sequence belongs to the plant organ size related (OSR) protein family. In terms of tissue distribution, mostly expressed in flowers, inflorescence stems, leaf primordia and young leaves, and, to a lower extent, in siliques, cotyledon vascular bundles, roots (pericycle and root tips) and mature leaves.

Its subcellular location is the membrane. The protein resides in the nucleus. It is found in the cytoplasm. The protein localises to the endoplasmic reticulum. Its function is as follows. Promotes cell proliferation-dependent organ growth. Takes part in the AXR1-dependent auxin signaling pathway that requires ANT during organogenesis. In Arabidopsis thaliana (Mouse-ear cress), this protein is Protein AUXIN-REGULATED GENE INVOLVED IN ORGAN SIZE (ARGOS).